The primary structure comprises 265 residues: Cytochrome c oxidase subunit 3 (265 aa).

Transmembrane regions (helical) follow at residues 16–36 (PWPL…VMYM), 41–61 (GGGT…FVWW), 85–105 (GIIL…WAFF), 138–158 (LILL…LAGL), 162–182 (AVYA…FQGI), 200–220 (FFLA…FLII), and 242–262 (AFYW…IYWW).

Belongs to the cytochrome c oxidase subunit 3 family. As to quaternary structure, component of the cytochrome c oxidase (complex IV, CIV), a multisubunit enzyme composed of a catalytic core of 3 subunits and several supernumerary subunits. The complex exists as a monomer or a dimer and forms supercomplexes (SCs) in the inner mitochondrial membrane with ubiquinol-cytochrome c oxidoreductase (cytochrome b-c1 complex, complex III, CIII).

The protein localises to the mitochondrion inner membrane. It carries out the reaction 4 Fe(II)-[cytochrome c] + O2 + 8 H(+)(in) = 4 Fe(III)-[cytochrome c] + 2 H2O + 4 H(+)(out). Its function is as follows. Component of the cytochrome c oxidase, the last enzyme in the mitochondrial electron transport chain which drives oxidative phosphorylation. The respiratory chain contains 3 multisubunit complexes succinate dehydrogenase (complex II, CII), ubiquinol-cytochrome c oxidoreductase (cytochrome b-c1 complex, complex III, CIII) and cytochrome c oxidase (complex IV, CIV), that cooperate to transfer electrons derived from NADH and succinate to molecular oxygen, creating an electrochemical gradient over the inner membrane that drives transmembrane transport and the ATP synthase. Cytochrome c oxidase is the component of the respiratory chain that catalyzes the reduction of oxygen to water. Electrons originating from reduced cytochrome c in the intermembrane space (IMS) are transferred via the dinuclear copper A center (CU(A)) of subunit 2 and heme A of subunit 1 to the active site in subunit 1, a binuclear center (BNC) formed by heme A3 and copper B (CU(B)). The BNC reduces molecular oxygen to 2 water molecules using 4 electrons from cytochrome c in the IMS and 4 protons from the mitochondrial matrix. In Marchantia polymorpha (Common liverwort), this protein is Cytochrome c oxidase subunit 3 (COX3).